The sequence spans 660 residues: Arginine--tRNA ligase, cytoplasmic (660 aa).

Met-1 carries the post-translational modification N-acetylmethionine. The segment at 1 to 72 (MDALVAHCSA…QAERNKPTKT (72 aa)) is could be involved in the assembly of the multisynthetase complex. Residues 200 to 202 (SPN), His-211, Tyr-384, Asp-388, and Gln-412 contribute to the L-arginine site. Positions 201 to 212 (PNIAKEMHVGHL) match the 'HIGH' region motif. The interaction with tRNA stretch occupies residues 529–543 (NTAAYLLYAFTRIRS).

Belongs to the class-I aminoacyl-tRNA synthetase family. In terms of assembly, interacts (via N-terminus) with AIMP1 (via N-terminus); this stimulates its catalytic activity. Interacts (via N-terminus) with LARS2 (via C-terminus). Monomer. Part of a multisubunit complex that groups tRNA ligases for Arg (RARS1), Asp (DARS1), Gln (QARS1), Ile (IARS1), Leu (LARS1), Lys (KARS1), Met (MARS1) the bifunctional ligase for Glu and Pro (EPRS1) and the auxiliary subunits AIMP1/p43, AIMP2/p38 and EEF1E1/p18. Interacts with QARS1. Part of a complex composed of RARS1, QARS1 and AIMP1.

The protein resides in the cytoplasm. The protein localises to the cytosol. The catalysed reaction is tRNA(Arg) + L-arginine + ATP = L-arginyl-tRNA(Arg) + AMP + diphosphate. Its function is as follows. Forms part of a macromolecular complex that catalyzes the attachment of specific amino acids to cognate tRNAs during protein synthesis. Modulates the secretion of AIMP1 and may be involved in generation of the inflammatory cytokine EMAP2 from AIMP1. This chain is Arginine--tRNA ligase, cytoplasmic (RARS1), found in Bos taurus (Bovine).